A 173-amino-acid polypeptide reads, in one-letter code: Thiol-disulfide oxidoreductase ResA (173 aa).

The helical; Signal-anchor for type II membrane protein transmembrane segment at 10 to 29 (VIILLILSGAVGFTLYQGFF) threads the bilayer. In terms of domain architecture, Thioredoxin spans 35–173 (MQIGKEAPNF…LEGYLKKITP (139 aa)). Cys73 and Cys76 are joined by a disulfide.

The protein belongs to the thioredoxin family. ResA subfamily.

It is found in the cell membrane. The protein operates within protein modification; cytochrome c assembly. Thiol-disulfide oxidoreductase which is required in disulfide reduction during c-type cytochrome synthesis. May accept reducing equivalents from CcdA, leading to breakage of disulfide bonds in apocytochrome c; following this reduction heme can be covalently attached. In Bacillus thuringiensis (strain Al Hakam), this protein is Thiol-disulfide oxidoreductase ResA.